A 316-amino-acid chain; its full sequence is MVARGNVVSIGQIAPKHSSEVSFSVDPVSWEIGSLLQRGMLLEVATSNKPGLVCPQSNGCHEDMSLMTFMVSSSVIFPALVMCTQAGRDHEGDLPLLLPVVRGIGAPYEKELFAATKGVNTQKGALFSAAILAGAAGYLSQKSRHFQIGELFEVVAAMTKGIVRRELNPSVLEKKESLSNGEKLYLRHQVPGIRGELERGLPSVRDYAVPALKYAQDLGASLEASFLHTLITLMSQVDDTNIISRGGLESLKKVKTLSKEVLKEGSIFNKEGIDNYFYLENFCIDRGLSPGGSADLLAITISAYLLSEEKFKCKIM.

It belongs to the CitG/MdcB family.

It carries out the reaction 3'-dephospho-CoA + ATP = 2'-(5''-triphospho-alpha-D-ribosyl)-3'-dephospho-CoA + adenine. In terms of biological role, involved in the formation of 2-(5''-phosphoribosyl)-3'-dephosphocoenzyme-A, the prosthetic group of the acyl-carrier protein of the malonate decarboxylase. In Malonomonas rubra, this protein is Probable 2-(5''-triphosphoribosyl)-3'-dephosphocoenzyme-A synthase (mdcB).